A 518-amino-acid chain; its full sequence is Mitochondrial 2-methylisocitrate lyase (518 aa).

This sequence belongs to the isocitrate lyase/PEP mutase superfamily. Isocitrate lyase family.

Its subcellular location is the mitochondrion matrix. It is found in the cytoplasm. The catalysed reaction is (2S,3R)-3-hydroxybutane-1,2,3-tricarboxylate = pyruvate + succinate. The protein operates within organic acid metabolism; propanoate degradation. Its function is as follows. Catalyzes the formation of pyruvate and succinate from 2-methylisocitrate during the metabolism of endogenous propionyl-CoA. Does not act on isocitrate. The protein is Mitochondrial 2-methylisocitrate lyase (icl2) of Schizosaccharomyces pombe (strain 972 / ATCC 24843) (Fission yeast).